The primary structure comprises 473 residues: Mitochondrial adenyl nucleotide antiporter SLC25A24-B (473 aa).

Positions 1 to 173 (MLEQVQKFLL…RYWKHSTVLD (173 aa)) are regulatory N-terminal domain. Topologically, residues 1–197 (MLEQVQKFLL…EKKTGQWWKQ (197 aa)) are mitochondrial intermembrane. 4 EF-hand domains span residues 19 to 54 (DSQS…MGME), 55 to 88 (VGKG…EEHE), 86 to 121 (EHEK…LGIK), and 122 to 157 (ISLD…NPAD). Ca(2+) contacts are provided by D32, N34, D36, K38, E43, D68, N70, D72, H74, E79, D99, N101, D103, K105, E110, D135, D137, T139, T141, and E146. Positions 159–168 (IQQIIRYWKH) are linker region. A C-terminal transmembrane transporter domain region spans residues 174–473 (IGDSLTIPDE…YEKMKVQLGI (300 aa)). 3 Solcar repeats span residues 192–277 (GQWW…YKKL), 285–370 (LGTA…LKNY), and 382–470 (PGVL…MKVQ). The chain crosses the membrane as a helical span at residues 198 to 215 (LMAGGMAGAVSRTGTAPL). Residues 216-251 (DRLKVMMQVHGSKGNSNIITGLKQMVKEGGIRSLWR) are Mitochondrial matrix-facing. The helical transmembrane segment at 252-271 (GNGVNVIKIAPETAMKFWAY) threads the bilayer. Topologically, residues 272–294 (EQYKKLFTSESGKLGTAERFVAG) are mitochondrial intermembrane. A helical transmembrane segment spans residues 295–308 (SLAGATAQTSIYPM). At 309–344 (EVLKTRLAVGRTGQYSGMFDCAKKIMQKEGIRAFYK) the chain is on the mitochondrial matrix side. A helical transmembrane segment spans residues 345 to 364 (GYIPNILGIIPYAGIDLAIY). Over 365–387 (ETLKNYWLQNHAKDSANPGVLVL) the chain is Mitochondrial intermembrane. The chain crosses the membrane as a helical span at residues 388–405 (LGCGTASSTCGQLASYPL). At 406–444 (ALIRTRMQAQASIEGAPQLNMGGLFRKIVAKEGFLGLYR) the chain is on the mitochondrial matrix side. Residues 445-464 (GIGPNFLKVLPAVSISYVVY) traverse the membrane as a helical segment. Over 465 to 473 (EKMKVQLGI) the chain is Mitochondrial intermembrane.

Belongs to the mitochondrial carrier (TC 2.A.29) family. In terms of assembly, monomer.

Its subcellular location is the mitochondrion inner membrane. The catalysed reaction is Mg(2+)(out) + phosphate(in) + ATP(out) = Mg(2+)(in) + phosphate(out) + ATP(in). It catalyses the reaction ADP(out) + phosphate(in) + H(+)(out) = ADP(in) + phosphate(out) + H(+)(in). The enzyme catalyses AMP(out) + phosphate(in) = AMP(in) + phosphate(out). It carries out the reaction phosphate(in) + ATP(out) + 2 H(+)(out) = phosphate(out) + ATP(in) + 2 H(+)(in). The catalysed reaction is dADP(in) + ADP(out) = dADP(out) + ADP(in). It catalyses the reaction Mg(2+)(in) + ADP(out) + ATP(in) + H(+)(out) = Mg(2+)(out) + ADP(in) + ATP(out) + H(+)(in). The enzyme catalyses ADP(out) + diphosphate(in) = ADP(in) + diphosphate(out). It carries out the reaction dAMP(in) + ADP(out) + H(+)(out) = dAMP(out) + ADP(in) + H(+)(in). The catalysed reaction is 3'-AMP(in) + ADP(out) + H(+)(out) = 3'-AMP(out) + ADP(in) + H(+)(in). It catalyses the reaction dAMP(out) + phosphate(in) = dAMP(in) + phosphate(out). The enzyme catalyses 3'-AMP(out) + phosphate(in) = 3'-AMP(in) + phosphate(out). It carries out the reaction dADP(out) + phosphate(in) + H(+)(out) = dADP(in) + phosphate(out) + H(+)(in). Its activity is regulated as follows. Activated by an increase in cytosolic calcium levels that induce a conformational change of the N-terminal regulatory domain, uncapping the channel and allowing transport. Inhibited by bathophenanthroline, mersalyl, p-hydroxymercuribenzoate, bromcresol purple and tannic acid. Functionally, electroneutral antiporter that mediates the transport of adenyl nucleotides through the inner mitochondrial membrane. Originally identified as an ATP-magnesium/inorganic phosphate antiporter, it also acts as a broad specificity adenyl nucleotide antiporter. By regulating the mitochondrial matrix adenyl nucleotide pool could adapt to changing cellular energetic demands and indirectly regulate adenyl nucleotide-dependent metabolic pathways. This is Mitochondrial adenyl nucleotide antiporter SLC25A24-B (slc25a24-b) from Xenopus laevis (African clawed frog).